A 511-amino-acid chain; its full sequence is Ribose import ATP-binding protein RbsA (511 aa).

ABC transporter domains are found at residues 13-249 (VSMD…VGRA) and 260-503 (ALGE…AGIA). An ATP-binding site is contributed by 45-52 (GENGAGKS).

This sequence belongs to the ABC transporter superfamily. Ribose importer (TC 3.A.1.2.1) family. As to quaternary structure, the complex is composed of an ATP-binding protein (RbsA), two transmembrane proteins (RbsC) and a solute-binding protein (RbsB).

The protein localises to the cell inner membrane. The catalysed reaction is D-ribose(out) + ATP + H2O = D-ribose(in) + ADP + phosphate + H(+). In terms of biological role, part of the ABC transporter complex RbsABC involved in ribose import. Responsible for energy coupling to the transport system. The polypeptide is Ribose import ATP-binding protein RbsA (Roseobacter denitrificans (strain ATCC 33942 / OCh 114) (Erythrobacter sp. (strain OCh 114))).